Consider the following 274-residue polypeptide: NADPH-dependent 7-cyano-7-deazaguanine reductase (274 aa).

A substrate-binding site is contributed by Val-80–Ser-82. Ser-82–Lys-83 contacts NADPH. Cys-181 (thioimide intermediate) is an active-site residue. The active-site Proton donor is the Asp-188. His-220–Glu-221 lines the substrate pocket. Arg-249–Gly-250 serves as a coordination point for NADPH.

It belongs to the GTP cyclohydrolase I family. QueF type 2 subfamily. In terms of assembly, homodimer.

Its subcellular location is the cytoplasm. The catalysed reaction is 7-aminomethyl-7-carbaguanine + 2 NADP(+) = 7-cyano-7-deazaguanine + 2 NADPH + 3 H(+). The protein operates within tRNA modification; tRNA-queuosine biosynthesis. Functionally, catalyzes the NADPH-dependent reduction of 7-cyano-7-deazaguanine (preQ0) to 7-aminomethyl-7-deazaguanine (preQ1). The chain is NADPH-dependent 7-cyano-7-deazaguanine reductase from Burkholderia pseudomallei (strain 1710b).